Here is a 321-residue protein sequence, read N- to C-terminus: uncharacterized protein (321 aa).

This is an uncharacterized protein from Galliformes (FAdV-1).